A 351-amino-acid chain; its full sequence is Ion-translocating oxidoreductase complex subunit D (351 aa).

A run of 4 helical transmembrane segments spans residues 20 to 40 (IMLW…YFFG), 44 to 64 (LIQV…TLSL), 89 to 109 (LPPL…IIIA), and 123 to 143 (PAMI…TSWL). Thr-187 carries the post-translational modification FMN phosphoryl threonine. Helical transmembrane passes span 215-235 (LSGI…LFLL), 244-264 (IPVS…IIAP), 267-287 (FAQP…FFIA), 301-321 (LIFG…GGYP), and 322-342 (DGVA…DYYT).

This sequence belongs to the NqrB/RnfD family. As to quaternary structure, the complex is composed of six subunits: RnfA, RnfB, RnfC, RnfD, RnfE and RnfG. Requires FMN as cofactor.

It is found in the cell inner membrane. Its function is as follows. Part of a membrane-bound complex that couples electron transfer with translocation of ions across the membrane. This is Ion-translocating oxidoreductase complex subunit D from Pectobacterium atrosepticum (strain SCRI 1043 / ATCC BAA-672) (Erwinia carotovora subsp. atroseptica).